The primary structure comprises 619 residues: Frizzled and smoothened-like protein L (619 aa).

The first 24 residues, 1–24 (MITNKSKYYFFLILIFINFYLINC), serve as a signal peptide directing secretion. N-linked (GlcNAc...) asparagine glycans are attached at residues Asn-4, Asn-63, Asn-112, Asn-143, Asn-159, Asn-184, and Asn-203. Residues 25-245 (QEEYPIDQTG…KQWDRLYDLS (221 aa)) are Extracellular-facing. Residues 31–169 (DQTGKCEPYI…YSIYDLSLVN (139 aa)) enclose the FZ domain. 2 cysteine pairs are disulfide-bonded: Cys-36–Cys-106 and Cys-48–Cys-99. A helical membrane pass occupies residues 246 to 266 (NSLSVLSCVGTLFLLFTFNIL). Residues 267 to 278 (NKKINRFDRMNS) lie on the Cytoplasmic side of the membrane. The chain crosses the membrane as a helical span at residues 279–299 (LFNGSVFMMSLSGVIILFAGG). Over 300 to 321 (PRALIKDGGARISVWQDPLCSA) the chain is Extracellular. A helical membrane pass occupies residues 322–342 (TGFIFQLFSIAAILFWVVMSF). Residues 343–358 (ELWYKIKFMTKKLDLK) lie on the Cytoplasmic side of the membrane. The chain crosses the membrane as a helical span at residues 359-379 (KYYIPFIIIVSLVFSIIPLAT). Residues 380–402 (KNYRMIRGNMHCWVHTTKLQNSL) lie on the Extracellular side of the membrane. A helical transmembrane segment spans residues 403-423 (FWIPLGIAITIGTIFIGLVMF). The Cytoplasmic portion of the chain corresponds to 424–444 (EIHRIVSANSKGGVLKLEIKS). The chain crosses the membrane as a helical span at residues 445 to 465 (ILNVALIYLTFIYLFAFNFYM). The Extracellular portion of the chain corresponds to 466–497 (NGQEGVVYGQIESFYQCTLENDASECTIQGPS). The helical transmembrane segment at 498–518 (IGSLGFFIFCIRIYGVYCFIL) threads the bilayer. The Cytoplasmic portion of the chain corresponds to 519–619 (QGLNYRAYNI…TLKDIEVSKS (101 aa)). Positions 581–605 (LNIDSAFSKNNESDDEDDYDPYKKS) are disordered.

This sequence belongs to the G-protein coupled receptor Fz/Smo family.

Its subcellular location is the membrane. This chain is Frizzled and smoothened-like protein L (fslL), found in Dictyostelium discoideum (Social amoeba).